The sequence spans 398 residues: tRNA (guanine-N(7)-)-methyltransferase (398 aa).

3 residues coordinate S-adenosyl-L-methionine: glutamate 124, glutamate 149, and aspartate 176. Aspartate 232 is a binding site for substrate.

It belongs to the class I-like SAM-binding methyltransferase superfamily. TrmB family.

It catalyses the reaction guanosine(46) in tRNA + S-adenosyl-L-methionine = N(7)-methylguanosine(46) in tRNA + S-adenosyl-L-homocysteine. Its pathway is tRNA modification; N(7)-methylguanine-tRNA biosynthesis. Its function is as follows. Catalyzes the formation of N(7)-methylguanine at position 46 (m7G46) in tRNA. The polypeptide is tRNA (guanine-N(7)-)-methyltransferase (Helicobacter acinonychis (strain Sheeba)).